A 668-amino-acid polypeptide reads, in one-letter code: UvrABC system protein B (668 aa).

Positions 25–414 (RGLHAGARFQ…IVEQLIRPTG (390 aa)) constitute a Helicase ATP-binding domain. An ATP-binding site is contributed by 38–45 (GVTGSGKT). The short motif at 91 to 114 (YYDYYQPESYVPARDLYIEKDASI) is the Beta-hairpin element. In terms of domain architecture, Helicase C-terminal spans 431–594 (DICQRVKACS…TIKKSIEDIL (164 aa)). The region spanning 627–662 (KKMVQALRLHMKVCARELRFEEAALIRDKILQLQRQ) is the UVR domain.

It belongs to the UvrB family. In terms of assembly, forms a heterotetramer with UvrA during the search for lesions. Interacts with UvrC in an incision complex.

The protein localises to the cytoplasm. Its function is as follows. The UvrABC repair system catalyzes the recognition and processing of DNA lesions. A damage recognition complex composed of 2 UvrA and 2 UvrB subunits scans DNA for abnormalities. Upon binding of the UvrA(2)B(2) complex to a putative damaged site, the DNA wraps around one UvrB monomer. DNA wrap is dependent on ATP binding by UvrB and probably causes local melting of the DNA helix, facilitating insertion of UvrB beta-hairpin between the DNA strands. Then UvrB probes one DNA strand for the presence of a lesion. If a lesion is found the UvrA subunits dissociate and the UvrB-DNA preincision complex is formed. This complex is subsequently bound by UvrC and the second UvrB is released. If no lesion is found, the DNA wraps around the other UvrB subunit that will check the other stand for damage. This is UvrABC system protein B from Treponema pallidum (strain Nichols).